Reading from the N-terminus, the 314-residue chain is Probable cell division protein WhiA (314 aa).

The segment at residues 277–311 (TLKELGEKMPSGAISKSGINHRLRKLNQLAEGYQQ) is a DNA-binding region (H-T-H motif).

This sequence belongs to the WhiA family.

Its function is as follows. Involved in cell division and chromosome segregation. This is Probable cell division protein WhiA from Latilactobacillus sakei subsp. sakei (strain 23K) (Lactobacillus sakei subsp. sakei).